A 158-amino-acid chain; its full sequence is Transcription elongation factor GreA (158 aa).

It belongs to the GreA/GreB family.

Its function is as follows. Necessary for efficient RNA polymerase transcription elongation past template-encoded arresting sites. The arresting sites in DNA have the property of trapping a certain fraction of elongating RNA polymerases that pass through, resulting in locked ternary complexes. Cleavage of the nascent transcript by cleavage factors such as GreA or GreB allows the resumption of elongation from the new 3'terminus. GreA releases sequences of 2 to 3 nucleotides. In Rhizobium johnstonii (strain DSM 114642 / LMG 32736 / 3841) (Rhizobium leguminosarum bv. viciae), this protein is Transcription elongation factor GreA.